We begin with the raw amino-acid sequence, 354 residues long: Histidinol-phosphate aminotransferase (354 aa).

Lys-222 is modified (N6-(pyridoxal phosphate)lysine).

This sequence belongs to the class-II pyridoxal-phosphate-dependent aminotransferase family. Histidinol-phosphate aminotransferase subfamily. In terms of assembly, homodimer. Pyridoxal 5'-phosphate is required as a cofactor.

It carries out the reaction L-histidinol phosphate + 2-oxoglutarate = 3-(imidazol-4-yl)-2-oxopropyl phosphate + L-glutamate. It functions in the pathway amino-acid biosynthesis; L-histidine biosynthesis; L-histidine from 5-phospho-alpha-D-ribose 1-diphosphate: step 7/9. The sequence is that of Histidinol-phosphate aminotransferase from Staphylococcus carnosus (strain TM300).